The chain runs to 102 residues: Large ribosomal subunit protein bL21 (102 aa).

This sequence belongs to the bacterial ribosomal protein bL21 family. In terms of assembly, part of the 50S ribosomal subunit. Contacts protein L20.

In terms of biological role, this protein binds to 23S rRNA in the presence of protein L20. This chain is Large ribosomal subunit protein bL21, found in Neisseria meningitidis serogroup A / serotype 4A (strain DSM 15465 / Z2491).